The chain runs to 248 residues: Clathrin light chain A (248 aa).

Residues 1-93 form a disordered region; it reads MAELDPFGAP…YQESNGPTDS (93 aa). A compositionally biased stretch (gly residues) spans 13–25; the sequence is APGGPALGNGVAG. The interval 100–162 is involved in binding clathrin heavy chain; that stretch reads VDRLQSEPES…QLQKTKASNR (63 aa). Phosphoserine occurs at positions 105 and 206. K223 carries the N6-acetyllysine modification. Phosphoserine is present on S236. Residue K242 is modified to N6-acetyllysine.

It belongs to the clathrin light chain family. In terms of assembly, clathrin coats are formed from molecules containing 3 heavy chains and 3 light chains. Interacts with CALY; the interaction stimulates clathrin self-assembly and clathrin-mediated endocytosis. Interacts with CKAP5 and TACC3 forming the TACC3/ch-TOG/clathrin complex located at spindle inter-microtubules bridges; the complex implicates clathrin triskelions.

The protein resides in the cytoplasmic vesicle membrane. The protein localises to the membrane. It localises to the coated pit. Its subcellular location is the cytoplasm. It is found in the cytoskeleton. The protein resides in the spindle. Its function is as follows. Clathrin is the major protein of the polyhedral coat of coated pits and vesicles. Acts as a component of the TACC3/ch-TOG/clathrin complex proposed to contribute to stabilization of kinetochore fibers of the mitotic spindle by acting as inter-microtubule bridge. This Rattus norvegicus (Rat) protein is Clathrin light chain A (Clta).